A 310-amino-acid polypeptide reads, in one-letter code: 4-hydroxyproline 2-epimerase (310 aa).

The Proton acceptor role is filled by Cys85. Substrate is bound by residues 86-87 (GH), His205, and Asp231. The active-site Proton donor is the Cys235. 236–237 (GT) is a binding site for substrate.

The protein belongs to the proline racemase family.

The enzyme catalyses trans-4-hydroxy-L-proline = cis-4-hydroxy-D-proline. Functionally, catalyzes the epimerization of trans-4-hydroxy-L-proline (t4LHyp) to cis-4-hydroxy-D-proline (c4DHyp). May be involved in a degradation pathway of t4LHyp, which would allow L.aggregata to grow on t4LHyp as a sole carbon source. Displays no proline racemase activity. This chain is 4-hydroxyproline 2-epimerase, found in Roseibium aggregatum (strain ATCC 25650 / DSM 13394 / JCM 20685 / NBRC 16684 / NCIMB 2208 / IAM 12614 / B1) (Stappia aggregata).